Reading from the N-terminus, the 215-residue chain is Ribonuclease T (215 aa).

Residues 20–194 form the Exonuclease domain; that stretch reads VVIDVETAGF…YDTERTAVLF (175 aa). Mg(2+) is bound by residues aspartate 23, glutamate 25, histidine 181, and aspartate 186. The active-site Proton donor/acceptor is the histidine 181.

Belongs to the RNase T family. In terms of assembly, homodimer. Mg(2+) serves as cofactor.

Its function is as follows. Trims short 3' overhangs of a variety of RNA species, leaving a one or two nucleotide 3' overhang. Responsible for the end-turnover of tRNA: specifically removes the terminal AMP residue from uncharged tRNA (tRNA-C-C-A). Also appears to be involved in tRNA biosynthesis. The polypeptide is Ribonuclease T (Salmonella choleraesuis (strain SC-B67)).